Here is a 249-residue protein sequence, read N- to C-terminus: DNA repair protein RecO (249 aa).

Belongs to the RecO family.

In terms of biological role, involved in DNA repair and RecF pathway recombination. In Mycoplasma mycoides subsp. mycoides SC (strain CCUG 32753 / NCTC 10114 / PG1), this protein is DNA repair protein RecO.